The chain runs to 461 residues: Bifunctional protein HldE (461 aa).

The tract at residues 1 to 315 (MKKILVIGDL…LILNQTHPKI (315 aa)) is ribokinase. 191-194 (NRTE) serves as a coordination point for ATP. Residue aspartate 260 is part of the active site. The interval 332–461 (FTNGCFDLLH…IEKIKRTCND (130 aa)) is cytidylyltransferase.

It in the N-terminal section; belongs to the carbohydrate kinase PfkB family. In the C-terminal section; belongs to the cytidylyltransferase family. As to quaternary structure, homodimer.

The enzyme catalyses D-glycero-beta-D-manno-heptose 7-phosphate + ATP = D-glycero-beta-D-manno-heptose 1,7-bisphosphate + ADP + H(+). The catalysed reaction is D-glycero-beta-D-manno-heptose 1-phosphate + ATP + H(+) = ADP-D-glycero-beta-D-manno-heptose + diphosphate. It participates in nucleotide-sugar biosynthesis; ADP-L-glycero-beta-D-manno-heptose biosynthesis; ADP-L-glycero-beta-D-manno-heptose from D-glycero-beta-D-manno-heptose 7-phosphate: step 1/4. Its pathway is nucleotide-sugar biosynthesis; ADP-L-glycero-beta-D-manno-heptose biosynthesis; ADP-L-glycero-beta-D-manno-heptose from D-glycero-beta-D-manno-heptose 7-phosphate: step 3/4. The protein operates within bacterial outer membrane biogenesis; LPS core biosynthesis. In terms of biological role, catalyzes the phosphorylation of D-glycero-D-manno-heptose 7-phosphate at the C-1 position to selectively form D-glycero-beta-D-manno-heptose-1,7-bisphosphate. Catalyzes the ADP transfer from ATP to D-glycero-beta-D-manno-heptose 1-phosphate, yielding ADP-D-glycero-beta-D-manno-heptose. The protein is Bifunctional protein HldE of Helicobacter pylori (strain ATCC 700392 / 26695) (Campylobacter pylori).